The following is a 636-amino-acid chain: Chaperone protein HtpG (636 aa).

An a; substrate-binding region spans residues 1–329 (MSKEHGAAAE…TEDLPLNISR (329 aa)). The segment at 330–550 (ETLQENALIA…DGGMTASMEK (221 aa)) is b. The interval 551–636 (LMRVMNKDES…TGWYAEVRKL (86 aa)) is c.

It belongs to the heat shock protein 90 family. In terms of assembly, homodimer.

It localises to the cytoplasm. In terms of biological role, molecular chaperone. Has ATPase activity. This chain is Chaperone protein HtpG, found in Oleidesulfovibrio alaskensis (strain ATCC BAA-1058 / DSM 17464 / G20) (Desulfovibrio alaskensis).